The chain runs to 481 residues: Glycogen synthase (481 aa).

ADP-alpha-D-glucose is bound at residue Lys15.

The protein belongs to the glycosyltransferase 1 family. Bacterial/plant glycogen synthase subfamily.

It catalyses the reaction [(1-&gt;4)-alpha-D-glucosyl](n) + ADP-alpha-D-glucose = [(1-&gt;4)-alpha-D-glucosyl](n+1) + ADP + H(+). Its pathway is glycan biosynthesis; glycogen biosynthesis. Functionally, synthesizes alpha-1,4-glucan chains using ADP-glucose. The polypeptide is Glycogen synthase (Thermosipho melanesiensis (strain DSM 12029 / CIP 104789 / BI429)).